A 197-amino-acid polypeptide reads, in one-letter code: uncharacterized protein (197 aa).

This is an uncharacterized protein from Orgyia pseudotsugata multicapsid polyhedrosis virus (OpMNPV).